Reading from the N-terminus, the 790-residue chain is MLIALVGLIFLLGGARLASLGGSWYFLLMGLATALAGVLIVLRRPAGALVYGVAFALTLVWALWDAGLEFWPLVSRLMLPAAFAVLVALAWPALRRSRALPTGRTAYGVATVLALAVVAGIGGMFVPHPPVAGNAGPGMTAVPPGSVQQNWSAYGNTDGGSRFAALDQINRSNGRPAAGSPGPTTPGEIANSDGNGAEDQLTPLQVGEKVFLCTPHNNLIALDASTGKQLWRREINATSSVWQRCRGLGYFDADAALPAPSVANPSPIAAVTVAQGANCRRRLFTNTIDGRLIAVDADTGAFCQGFGSNGQVDLKAGLGAAPDPFYQLTSPPLVAGTTVVGGRTRADDNVQTDMPGGVVRGSMWSPVRSAGLDPGNPHDRQAPAAGSSYVRSTPNVWAPMSYDAAMNTVFLPLGGPSTDLYGAERTALDHRYGASVLALDATTGAEKWVYQTVHNDLWDFDLPMQPSLIDFPNQDGSHTPAVVIGTKAGQIYVLDRATGKPLTEVREVPVKGSDIAHEQYAPTQPLSVGMPQIGTKHLTESDMWGATAMDQMLCRIAFKQMRYEGLYTAPGTDVSLSFPGSLGGMNWGGLSTDPVHDVVFANDMRLGLWVQMIPADTRKAEAAGGGEAVNTGMGAVPLKGTPYAVNKNRFLSALGIPCQAPPYGTLSAIDLKTRSIAWQVPVGTVQDTGPFGIKMHLPIPIGMPTLGGTLSTQGGLVFIAGTQDYYLRAFDSATGKELWKGRLPVGSQGGPITYVSHKTGKQYVVISAGGARQSPDRGDYVIAYSLPDAH.

The next 4 membrane-spanning stretches (helical) occupy residues 22–42 (GSWY…LIVL), 48–68 (ALVY…DAGL), 77–94 (LMLP…WPAL), and 106–126 (AYGV…GMFV). Residues 171–200 (RSNGRPAAGSPGPTTPGEIANSDGNGAEDQ) are disordered. Residues 174–187 (GRPAAGSPGPTTPG) are compositionally biased toward low complexity.

This sequence belongs to the bacterial PQQ dehydrogenase family. Requires pyrroloquinoline quinone as cofactor.

It is found in the cell membrane. The catalysed reaction is L-quinate + a quinone = 3-dehydroquinate + a quinol. Its pathway is aromatic compound metabolism; 3,4-dihydroxybenzoate biosynthesis; 3-dehydroquinate from D-quinate (PQQ route): step 1/1. This Xanthomonas campestris pv. juglandis (Xanthomonas arboricola pv. juglandis) protein is Probable quinate dehydrogenase (quinone) (qumA).